The sequence spans 210 residues: Ovomucoid (210 aa).

A signal peptide spans 1–24; the sequence is MAMAGVFVLFSFVLCGFLPDAAFG. 3 Kazal-like domains span residues 25–88, 89–153, and 156–210; these read AEVD…ECKE, TVPM…GCRK, and AAVS…FGKC. 3 cysteine pairs are disulfide-bonded: Cys29-Cys68, Cys46-Cys65, and Cys54-Cys86. An N-linked (GlcNAc...) asparagine glycan is attached at Asn34. Asn77, Asn93, and Asn99 each carry an N-linked (GlcNAc...) asparagine glycan. 6 disulfide bridges follow: Cys94–Cys133, Cys111–Cys130, Cys119–Cys151, Cys162–Cys192, Cys170–Cys189, and Cys178–Cys210. N-linked (GlcNAc...) asparagine; partial glycosylation is present at Asn199.

Its subcellular location is the secreted. Functionally, serine protease inhibitor. Inhibits trypsin. This is Ovomucoid from Gallus gallus (Chicken).